Reading from the N-terminus, the 1183-residue chain is PAN2-PAN3 deadenylation complex catalytic subunit PAN2 (1183 aa).

Positions 1 to 24 (MDGWTEISRIAATTQPPKGPSPHI) are disordered. WD repeat units lie at residues 159-207 (DLNK…SIKS), 269-309 (PFPA…NVFL), and 327-366 (SKAPFMTNLEISENGDFFAFSDSYATMHLWTLNNSGSTIT). The linker stretch occupies residues 369–520 (FVNFPASIEQ…FQYKVPLSRK (152 aa)). The USP domain maps to 521-919 (KIPNCYSRLQ…KPVILVYHDS (399 aa)). The region spanning 977 to 1151 (IAIDAEFVNL…EDAYTALLLY (175 aa)) is the Exonuclease domain. Aspartate 980, glutamate 982, aspartate 1090, and aspartate 1143 together coordinate a divalent metal cation.

Belongs to the peptidase C19 family. PAN2 subfamily. In terms of assembly, forms a heterotrimer with an asymmetric homodimer of the regulatory subunit PAN3 to form the poly(A)-nuclease (PAN) deadenylation complex. The cofactor is a divalent metal cation.

The protein localises to the cytoplasm. It catalyses the reaction Exonucleolytic cleavage of poly(A) to 5'-AMP.. Its activity is regulated as follows. Positively regulated by the regulatory subunit PAN3. Its function is as follows. Catalytic subunit of the poly(A)-nuclease (PAN) deadenylation complex, one of two cytoplasmic mRNA deadenylases involved in mRNA turnover. PAN specifically shortens poly(A) tails of RNA and the activity is stimulated by poly(A)-binding protein PAB1. PAN deadenylation is followed by rapid degradation of the shortened mRNA tails by the CCR4-NOT complex. Deadenylated mRNAs are then degraded by two alternative mechanisms, namely exosome-mediated 3'-5' exonucleolytic degradation, or deadenylation-dependent mRNA decaping and subsequent 5'-3' exonucleolytic degradation by XRN1. May also be involved in post-transcriptional maturation of mRNA poly(A) tails. This chain is PAN2-PAN3 deadenylation complex catalytic subunit PAN2, found in Scheffersomyces stipitis (strain ATCC 58785 / CBS 6054 / NBRC 10063 / NRRL Y-11545) (Yeast).